The primary structure comprises 1484 residues: Chromatin remodeling regulator CECR2 (1484 aa).

The segment at 170-241 (VQGKSNGELS…RHGSQGPGQG (72 aa)) is disordered. The segment covering 197–209 (TGKRRGRPPKRKK) has biased composition (basic residues). Basic and acidic residues predominate over residues 210–222 (LQEEILLSEKQEE). The span at 223–234 (NSLASEPQTRHG) shows a compositional bias: polar residues. S422 carries the phosphoserine modification. In terms of domain architecture, Bromo spans 434–538 (FELDDDFTAM…RCFHRAMMKH (105 aa)). T546 carries the phosphothreonine modification. Disordered stretches follow at residues 556–704 (EKRE…GPRL), 796–825 (GNHG…PRTL), 919–1053 (GVPY…SYPG), 1165–1259 (VMGG…LFSD), 1287–1320 (AKVP…LDLD), and 1442–1484 (YRPS…LDQS). S571 is modified (phosphoserine). Residues 605–614 (SSGDDQSSSS) are compositionally biased toward low complexity. At S1014 the chain carries Phosphoserine. Asymmetric dimethylarginine is present on residues R1197 and R1203. Pro residues predominate over residues 1243 to 1254 (SGPPASQPPPPR). Positions 1304–1320 (DESMERPESPKEFLDLD) are enriched in basic and acidic residues. S1312 carries the phosphoserine modification. Positions 1451-1469 (PVQSQASFPKTPTAATSQE) are enriched in polar residues. Residues 1474-1484 (HKPPTLPLDQS) are compositionally biased toward pro residues.

In terms of assembly, component of the CERF-1 ISWI chromatin remodeling complex (also called the CECR2-containing remodeling factor (CERF) complex) at least composed of CECR2 and SMARCA1. Component of the CERF-5 ISWI chromatin remodeling complex at least composed of SMARCA5/SNF2H and CECR2. LUZP1 is detected as part of the CERF-1 and CERF-5 complexes in embryonic stem (ES) cells where it is involved in complex stabilization but is not detected in the complexes in the testis. Interacts with CCAR2; CCAR2 may form part of the CERF-1 and/or CEF-5 ISWI chromatin remodeling complexes in ES cells. Interacts with acetylated lysine residues on histone H2A and H3 (in vitro). Interacts with LRPPRC. As to expression, highly expressed in skeletal muscle, thymus, placenta and lung. Expressed at lower level in brain, heart, colon, spleen, kidney.

It localises to the nucleus. Its function is as follows. Regulatory subunit of the ATP-dependent CERF-1 and CERF-5 ISWI chromatin remodeling complexes, which form ordered nucleosome arrays on chromatin and facilitate access to DNA during DNA-templated processes such as DNA replication, transcription, and repair. The complexes do not have the ability to slide mononucleosomes to the center of a DNA template. The CERF-1 ISWI chromatin remodeling complex has a lower ATP hydrolysis rate than the CERF-5 ISWI chromatin remodeling complex. Plays a role in various processes during development: required during embryogenesis for neural tube closure and inner ear development. In adults, required for spermatogenesis, via the formation of ISWI-type chromatin complexes. In histone-modifying complexes, CECR2 recognizes and binds acylated histones: binds histones that are acetylated and/or butyrylated. May also be involved through its interaction with LRPPRC in the integration of cytoskeletal network with vesicular trafficking, nucleocytosolic shuttling, transcription, chromosome remodeling and cytokinesis. The chain is Chromatin remodeling regulator CECR2 (CECR2) from Homo sapiens (Human).